The chain runs to 436 residues: Serine--tRNA ligase (436 aa).

242 to 244 (TAE) serves as a coordination point for L-serine. 273-275 (RSE) serves as a coordination point for ATP. An L-serine-binding site is contributed by Glu-296. 360–363 (EISS) lines the ATP pocket. Ser-395 serves as a coordination point for L-serine.

Belongs to the class-II aminoacyl-tRNA synthetase family. Type-1 seryl-tRNA synthetase subfamily. Homodimer. The tRNA molecule binds across the dimer.

The protein resides in the cytoplasm. The enzyme catalyses tRNA(Ser) + L-serine + ATP = L-seryl-tRNA(Ser) + AMP + diphosphate + H(+). The catalysed reaction is tRNA(Sec) + L-serine + ATP = L-seryl-tRNA(Sec) + AMP + diphosphate + H(+). It participates in aminoacyl-tRNA biosynthesis; selenocysteinyl-tRNA(Sec) biosynthesis; L-seryl-tRNA(Sec) from L-serine and tRNA(Sec): step 1/1. Functionally, catalyzes the attachment of serine to tRNA(Ser). Is also able to aminoacylate tRNA(Sec) with serine, to form the misacylated tRNA L-seryl-tRNA(Sec), which will be further converted into selenocysteinyl-tRNA(Sec). The polypeptide is Serine--tRNA ligase (Polynucleobacter necessarius subsp. necessarius (strain STIR1)).